The chain runs to 92 residues: N(2)-fixation sustaining protein CowN (92 aa).

It belongs to the CowN family.

Its function is as follows. Is required to sustain N(2)-dependent growth in the presence of low levels of carbon monoxide (CO). Probably acts by protecting the N(2) fixation ability of the nitrogenase complex, which is inactivated in the presence of CO. The chain is N(2)-fixation sustaining protein CowN from Cereibacter sphaeroides (strain ATCC 17025 / ATH 2.4.3) (Rhodobacter sphaeroides).